The sequence spans 721 residues: Putative cullin-like protein 1 (721 aa).

The Cullin neddylation domain maps to 651-713 (DRRYAIDAAL…RDYLERDTEN (63 aa)).

Belongs to the cullin family.

The sequence is that of Putative cullin-like protein 1 from Arabidopsis thaliana (Mouse-ear cress).